The chain runs to 58 residues: U8-ctenitoxin-Pk1a (58 aa).

5 disulfide bridges follow: C2-C16, C9-C22, C15-C40, C24-C38, and C48-C55.

In terms of tissue distribution, expressed by the venom gland.

The protein resides in the secreted. In terms of biological role, no toxic effects on mice at dose levels of 5 ug per mouse. May be toxic to insects. This is U8-ctenitoxin-Pk1a from Phoneutria keyserlingi (Brazilian wandering spider).